The sequence spans 122 residues: uncharacterized protein (122 aa).

Residues 1–10 are compositionally biased toward polar residues; it reads MGTGLRSQSL. The tract at residues 1 to 68 is disordered; sequence MGTGLRSQSL…GQEWLPGSLG (68 aa). The span at 40 to 56 shows a compositional bias: basic and acidic residues; it reads QGREKSRSSDGGPERLD.

This is an uncharacterized protein from Bos taurus (Bovine).